Reading from the N-terminus, the 745-residue chain is Elongation factor G, mitochondrial (745 aa).

The tr-type G domain maps to 40 to 317 (EKIRNIGISA…AVLDYLPNPG (278 aa)). GTP is bound by residues 49-56 (AHIDSGKT), 116-120 (DTPGH), and 170-173 (NKLD).

Belongs to the TRAFAC class translation factor GTPase superfamily. Classic translation factor GTPase family. EF-G/EF-2 subfamily.

Its subcellular location is the mitochondrion. It participates in protein biosynthesis; polypeptide chain elongation. Its function is as follows. Mitochondrial GTPase that catalyzes the GTP-dependent ribosomal translocation step during translation elongation. During this step, the ribosome changes from the pre-translocational (PRE) to the post-translocational (POST) state as the newly formed A-site-bound peptidyl-tRNA and P-site-bound deacylated tRNA move to the P and E sites, respectively. Catalyzes the coordinated movement of the two tRNA molecules, the mRNA and conformational changes in the ribosome. Essential during development as it acts as a retrograde signal from mitochondria to the nucleus to slow down cell proliferation if mitochondrial energy output is low. The protein is Elongation factor G, mitochondrial of Drosophila willistoni (Fruit fly).